Here is a 184-residue protein sequence, read N- to C-terminus: Mediator of RNA polymerase II transcription subunit 11 (184 aa).

Positions 142 to 152 (ATTKQETNINN) are enriched in polar residues. The tract at residues 142–184 (ATTKQETNINNEDSEKEKQENITAIETKKESSENEDEDFDMIA) is disordered. The segment covering 154–173 (DSEKEKQENITAIETKKESS) has biased composition (basic and acidic residues). Residues 174–184 (ENEDEDFDMIA) show a composition bias toward acidic residues.

The protein belongs to the Mediator complex subunit 11 family. Component of the Mediator complex.

It localises to the nucleus. Functionally, component of the Mediator complex, a coactivator involved in the regulated transcription of nearly all RNA polymerase II-dependent genes. Mediator functions as a bridge to convey information from gene-specific regulatory proteins to the basal RNA polymerase II transcription machinery. Mediator is recruited to promoters by direct interactions with regulatory proteins and serves as a scaffold for the assembly of a functional pre-initiation complex with RNA polymerase II and the general transcription factors. This is Mediator of RNA polymerase II transcription subunit 11 (MED11) from Debaryomyces hansenii (strain ATCC 36239 / CBS 767 / BCRC 21394 / JCM 1990 / NBRC 0083 / IGC 2968) (Yeast).